The following is an 807-amino-acid chain: Histone transcription regulator slm9 (807 aa).

WD repeat units lie at residues 62-100 (SFDS…KAFQ) and 102-140 (LSGP…ETIV). Positions 144 to 164 (EHADSNHQPAVSIEESKEAVE) are disordered. WD repeat units lie at residues 182 to 221 (GHHT…VEKS), 230 to 273 (PTGN…YDIN), 276 to 322 (GHQG…PMAV), and 326 to 367 (LSCS…EKMD). The segment at 388–437 (NKNAAADRTTSPTQGQPESPSKSILLRPPPSIASSPESKRRKCPKKFVAR) is disordered. Polar residues predominate over residues 395 to 409 (RTTSPTQGQPESPSK). 3 positions are modified to phosphoserine: Ser406, Ser421, and Ser422. Residues 426 to 435 (KRRKCPKKFV) are compositionally biased toward basic residues. WD repeat units lie at residues 492–526 (DCSW…YIYS) and 528–574 (AGRL…AIHS).

The protein belongs to the WD repeat HIR1 family. Interacts with hip1 and hip3.

It localises to the cytoplasm. The protein localises to the nucleus. Its function is as follows. Probably required for replication-independent chromatin assembly. Required for transcriptional silencing in the outer repeat (otr) centromeric repeats and the Tf2 long terminal repeat retrotransposons. May play an indirect role in the regulation of cdc2 and/or wee1 at the G2/M stage of mitosis. The protein is Histone transcription regulator slm9 (slm9) of Schizosaccharomyces pombe (strain 972 / ATCC 24843) (Fission yeast).